Here is a 94-residue protein sequence, read N- to C-terminus: Cyclin-dependent kinases regulatory subunit (94 aa).

It belongs to the CKS family. In terms of assembly, forms a homohexamer that can probably bind six kinase subunits. Interacts with cdk-1.

The protein localises to the nucleus. Functionally, binds to the catalytic subunit of the cyclin dependent kinases and is essential for their biological function. Has a role in the exit from M phase during early mitotic cell division. More specifically, thought to act by the degrading B-type cyclins that causes breakdown of nuclear envelope and exit mitosis. This is Cyclin-dependent kinases regulatory subunit from Caenorhabditis briggsae.